A 252-amino-acid polypeptide reads, in one-letter code: Reaction center protein L chain (252 aa).

3 helical membrane-spanning segments follow: residues 8 to 30, 58 to 86, and 91 to 113; these read FFGV…GAAL, GGLW…SRKL, and HVPA…RPLL. (7R,8Z)-bacteriochlorophyll b contacts are provided by His128 and His148. Residues 146–173 traverse the membrane as a helical segment; it reads PMHMVAVTLFFTTTLALALHGSLVLAAI. His165 is a binding site for Fe cation. Position 191 (Phe191) interacts with a ubiquinone. Residues 200–225 traverse the membrane as a helical segment; it reads GTLGIHRLGLFLALGAGFASATCILL. Residue His205 coordinates Fe cation.

It belongs to the reaction center PufL/M/PsbA/D family. In terms of assembly, reaction center is composed of four bacteriochlorophylls, two bacteriopheophytins, two ubiquinones, one iron, and two highly hydrophobic polypeptide chains (designated L and M).

It localises to the cell inner membrane. The reaction center is a membrane-bound complex that mediates the initial photochemical event in the electron transfer process of photosynthesis. The sequence is that of Reaction center protein L chain (pufL) from Acidiphilium cryptum.